The following is a 342-amino-acid chain: Deoxyhypusine synthase regulatory subunit (342 aa).

NAD(+) is bound by residues 72–76, 98–100, glutamate 104, aspartate 213, 282–283, and 316–317; these read SNLIS, TAG, TG, and DA.

It belongs to the deoxyhypusine synthase family. In terms of assembly, heterotetramer formed by a homodimer of the non-catalytic regulatory subunit DHSp and a homodimer of the catalytic subunit DHSc where DHSc appears to bind spermidine and DHSp appears to bind NAD(+).

It participates in protein modification; eIF5A hypusination. In terms of biological role, required for the activation and stability of deoxyhypusine synthase DHSc. Required for cell growth and survival. This chain is Deoxyhypusine synthase regulatory subunit, found in Trypanosoma brucei brucei (strain 927/4 GUTat10.1).